The following is a 596-amino-acid chain: Tripeptidyl-peptidase SED2 (596 aa).

The signal sequence occupies residues 1–16 (MLVLKFVCLLASVAAA). Positions 18 to 203 (PTSWSSHKVV…LEAMSEEEFS (186 aa)) are cleaved as a propeptide — removed in mature form. In terms of domain architecture, Peptidase S53 spans 210–596 (LVTTACLREL…NFQALTKVLP (387 aa)). N-linked (GlcNAc...) asparagine glycosylation occurs at asparagine 265. Active-site charge relay system residues include glutamate 286 and aspartate 290. A glycan (N-linked (GlcNAc...) asparagine) is linked at asparagine 403. Catalysis depends on serine 501, which acts as the Charge relay system. Ca(2+)-binding residues include aspartate 543 and isoleucine 544. N-linked (GlcNAc...) asparagine glycosylation occurs at asparagine 572. Glycine 576 and aspartate 578 together coordinate Ca(2+).

Requires Ca(2+) as cofactor.

It localises to the secreted. The protein resides in the extracellular space. It catalyses the reaction Release of an N-terminal tripeptide from a polypeptide.. Secreted tripeptidyl-peptidase which degrades proteins at acidic pHs and is involved in virulence. The chain is Tripeptidyl-peptidase SED2 (SED2) from Arthroderma otae (strain ATCC MYA-4605 / CBS 113480) (Microsporum canis).